A 536-amino-acid polypeptide reads, in one-letter code: Octopamine receptor beta-2R (536 aa).

A disordered region spans residues 1–26; that stretch reads MLLCDGLGPEPPRQRHRNRTSAARIR. The Extracellular segment spans residues 1–157; it reads MLLCDGLGPE…LDNIVWVFKA (157 aa). Residues 14-26 are compositionally biased toward basic residues; that stretch reads QRHRNRTSAARIR. 4 N-linked (GlcNAc...) asparagine glycosylation sites follow: Asn-18, Asn-92, Asn-113, and Asn-126. Residues 158–178 traverse the membrane as a helical segment; the sequence is FVMLLIIIAAICGNLLVIISV. At 179 to 190 the chain is on the cytoplasmic side; that stretch reads MRVRKLRVITNY. The helical transmembrane segment at 191–211 threads the bilayer; it reads FVVSLAMADIMVAIMAMTFNF. The Extracellular portion of the chain corresponds to 212-233; sequence SVQVTGRWNFSPFLCDLWNSLD. Residues 234-256 form a helical membrane-spanning segment; it reads VYFSTASILHLCCISVDRYYAIV. The Cytoplasmic segment spans residues 257-270; the sequence is KPLKYPISMTKRVV. Residues 271–291 form a helical membrane-spanning segment; that stretch reads GIMLLNTWISPALLSFLPIFI. At 292–320 the chain is on the extracellular side; that stretch reads GWYTTPQHQQFVIQNPTQCSFVVNKYYAV. Residues 321-341 form a helical membrane-spanning segment; it reads ISSSISFWIPCTIMIFTYLAI. Over 342 to 412 the chain is Cytoplasmic; sequence FREANRQEKQ…MKREHKAART (71 aa). Residues 413–433 traverse the membrane as a helical segment; the sequence is LGIIMGTFILCWLPFFLWYTL. The Extracellular portion of the chain corresponds to 434-444; the sequence is SMTCEECQVPD. Residues 445–465 form a helical membrane-spanning segment; the sequence is IVVSILFWIGYFNSTLNPLIY. Over 466 to 536 the chain is Cytoplasmic; it reads AYFNRDFREA…RRQSQMVDNL (71 aa).

The protein belongs to the G-protein coupled receptor 1 family. In terms of tissue distribution, in the adult, expressed in the superior protocerebrum and the optic lobe medulla of the central nervous system, nurse cells of egg chambers in the ovary at oogenic stages 1-10, and spermatogonia and spermatocytes in the testis. Expressed in the oviduct epithelium. Also expressed in the spermatheca. Expressed in embryonic and larval ventral nerve cord and brain lobe, embryonic and larval salivary glands and larval imaginal disk and midgut. Also expressed in larval synaptic boutons.

It is found in the cell membrane. Functionally, autoreceptor for octopamine (OA), which is a neurotransmitter, neurohormone, and neuromodulator in invertebrates. Essential for ovulation and fertilization. During ovulation it mediates the OA-induced relaxation of the oviduct visceral muscles, by increasing cAMP levels and activating effectors such as calmodulin-dependent kinase II (CaMKII) and cAMP-dependent protein kinase A (PKA) pathways. Positively regulates synaptic growth; an action that is antagonized by Octbeta1R. The protein is Octopamine receptor beta-2R of Drosophila melanogaster (Fruit fly).